Here is a 490-residue protein sequence, read N- to C-terminus: MTGLLIAGTTSDAGKTAVTTGLCRALARRGLKVAPYKAQNMSNNSMVCAGDDGGVEIGRAQWVQALAARATPEAAMNPVLLKPGSDRRSHVVLMGRPWGHVSSSDWLEGRRALAAAAHAAYDDLAGRYDVIVAEGAGSPTEINLRAGDYVNLGLARHAGLPTVVVGDIDRGGVFAAFFGTVALLSPEDQALIAGFVVNKFRGDPALLAPGLRDLERLTGRRVYGTLPWHPDLWLDSEDALELQGRRSARPGARRVAVVRLPRISNFTDVDAFGLEPDLDVVFASHPSALADADLVVLPGTRSTIADLAWLRSRGLDRAVLAHAAAGRPVLGICGGFQMLGRVIRDPHGVEGGTSEADGLGLLDIETDFVADKALRLPEGQWEATSASGYEIHHGRITPGPGGDEFPGGVRCGPVFGTMWHGAFEGDALRARFLTETLGVPASGASFPKAREDRIDLLGDLVEEHLDVDALLRLAEHAPPQGLPFLPPGSP.

Residues 252-428 (ARRVAVVRLP…WHGAFEGDAL (177 aa)) form the GATase cobBQ-type domain. Cys-333 acts as the Nucleophile in catalysis. His-420 is a catalytic residue.

The protein belongs to the CobB/CobQ family. CobQ subfamily.

Its pathway is cofactor biosynthesis; adenosylcobalamin biosynthesis. Catalyzes amidations at positions B, D, E, and G on adenosylcobyrinic A,C-diamide. NH(2) groups are provided by glutamine, and one molecule of ATP is hydrogenolyzed for each amidation. The polypeptide is Cobyric acid synthase (Mycolicibacterium vanbaalenii (strain DSM 7251 / JCM 13017 / BCRC 16820 / KCTC 9966 / NRRL B-24157 / PYR-1) (Mycobacterium vanbaalenii)).